Here is a 139-residue protein sequence, read N- to C-terminus: Immunogenic miracidial antigen 8I (139 aa).

A disordered region spans residues 61 to 139 (IDVGDEDYHD…PKKYGSGYKH (79 aa)). Positions 64–85 (GDEDYHDGDDDVDYTDDVDDVD) are enriched in acidic residues. Positions 90–103 (SPSQLLQGGYQRNQ) are enriched in polar residues.

Belongs to the immunogenic miracidial antigen family.

The chain is Immunogenic miracidial antigen 8I (8I) from Schistosoma japonicum (Blood fluke).